The primary structure comprises 400 residues: Dehydrogenase efuE (400 aa).

NAD(+) is bound by residues alanine 222–isoleucine 223, threonine 303–arginine 305, and aspartate 329. Arginine 305 is an active-site residue. Residue glutamate 334 is part of the active site. Histidine 352 serves as the catalytic Proton donor. Position 352-355 (histidine 352–glycine 355) interacts with NAD(+).

The protein belongs to the D-isomer specific 2-hydroxyacid dehydrogenase family.

It participates in secondary metabolite biosynthesis; terpenoid biosynthesis. Its function is as follows. Dehydrogenase; part of the gene cluster that mediates the biosynthesis of enfumafungin, a glycosylated fernene-type triterpenoid with potent antifungal activity, mediated by its interaction with beta-1,3-glucan synthase and the fungal cell wall. The pathway begins with the terpene cyclase-glycosyl transferase fusion protein that most likely uses 2,3-oxidosqualene as substrate and catalyzes glycosylation immediately after cyclization. The fernene glycoside then could be processed by the desaturase efuI which catalyzes isomerization of a double bond established by efuA to form the core structure. The latter would then undergo a series of hydroxylations in unknown order at C-2, C-19, C-23 and C-25, which would be catalyzed by two of the three cytochrome P450 monooxygenases efuB, efuG or efuH. The hydroxy-group at C-25 becomes oxidized by the dehydrogenase efuE to enable a spontaneous, non-enzymatic hemiacetal formation with C-23. After hydroxylation at C-2, acetylation by the acetyltransferase efuC takes place. The final steps in enfumafungin biosynthesis require expansion of the 5-membered ring by lactonization via a Baeyer-Villiger reaction mediated by one of the BGC's cytochrome P450 monooxygenases (efuB, efuG or efuH) followed by ring cleavage. This type of reaction would establish a double bond between C-20 and C-21 which could be reduced by the reductase efuL to form the final product. This chain is Dehydrogenase efuE, found in Hormonema carpetanum.